The sequence spans 194 residues: Ras-like protein RAS1 (194 aa).

16-23 (GAGGVGKS) serves as a coordination point for GTP. Positions 38 to 46 (YDPTIEDSY) match the Effector region motif. GTP contacts are provided by residues 63 to 67 (DTAGQ) and 122 to 125 (NKVD). Cysteine methyl ester is present on Cys191. Cys191 carries S-geranylgeranyl cysteine lipidation. A propeptide spans 192–194 (TLL) (removed in mature form).

This sequence belongs to the small GTPase superfamily. Ras family.

Its subcellular location is the cell membrane. It catalyses the reaction GTP + H2O = GDP + phosphate + H(+). Alternates between an inactive form bound to GDP and an active form bound to GTP. Activated by a guanine nucleotide-exchange factor (GEF) and inactivated by a GTPase-activating protein (GAP). Ras proteins bind GDP/GTP and possess intrinsic GTPase activity. In Hydra vulgaris (Hydra), this protein is Ras-like protein RAS1 (RAS1).